A 72-amino-acid chain; its full sequence is Brevinin-2GHb (72 aa).

A signal peptide spans 1 to 22; that stretch reads MFTMKKSLLLLFFLGTVSLSLC. Residues 23–42 constitute a propeptide that is removed on maturation; that stretch reads EQERGADEDDGGEMTEELKR. C66 and C72 are disulfide-bonded.

Expressed by the skin glands.

The protein resides in the secreted. Antimicrobial peptide. Active against the Gram-positive bacteria S.aureus FDA209P (MIC=16.5 ug/ml) and B.subtilis ATCC 6633 (MIC&gt;64 ug/ml), and the Gram-negative bacteria E.coli O111 (MIC=8.2 ug/ml) and E.coli ATCC 25922 (MIC=8.2 ug/ml). Not active against the fungus C.albicans. This Sylvirana guentheri (Gunther's frog) protein is Brevinin-2GHb.